An 896-amino-acid polypeptide reads, in one-letter code: Cytokine receptor common subunit beta (896 aa).

The signal sequence occupies residues 1–22 (MDQQMALTWGLCYMALVALCWG). Over 23 to 441 (HGVTEAEETV…SEEYTWKTDW (419 aa)) the chain is Extracellular. Cys39 and Cys49 form a disulfide bridge. An N-linked (GlcNAc...) asparagine glycan is attached at Asn62. Cystine bridges form between Cys77–Cys99 and Cys88–Cys94. Positions 136-243 (PPLPKNVSIS…PEVHWDSQPG (108 aa)) constitute a Fibronectin type-III 1 domain. An N-linked (GlcNAc...) asparagine glycan is attached at Asn141. Positions 220–233 (SPGSSLSGRPSRWS) are enriched in low complexity. The segment at 220–243 (SPGSSLSGRPSRWSPEVHWDSQPG) is disordered. 2 disulfide bridges follow: Cys253-Cys263 and Cys292-Cys310. The region spanning 343–439 (QMEPPTLNLT…KWSEEYTWKT (97 aa)) is the Fibronectin type-III 2 domain. N-linked (GlcNAc...) asparagine glycosylation occurs at Asn350. The short motif at 428–432 (WSKWS) is the WSXWS motif element. Residues 442–463 (VMPTLWIVLILVFLILTLLLIL) form a helical membrane-spanning segment. The Cytoplasmic segment spans residues 464–896 (RFGCVSVYRT…WDNSQSGKVC (433 aa)). The Box 1 motif signature appears at 477–485 (WKEKIPNPS). 2 disordered regions span residues 543–620 (EDPN…GGSL) and 658–725 (CGSS…TGPL). 2 stretches are compositionally biased toward polar residues: residues 555–571 (PDTT…QLPN) and 658–668 (CGSSLETSGSP). The span at 716 to 725 (PVLTLPTGPL) shows a compositional bias: low complexity. Residues Ser752 and Ser754 each carry the phosphoserine modification. The residue at position 765 (Tyr765) is a Phosphotyrosine. A disordered region spans residues 771 to 810 (SVSQAAKSPPGHPAPPVASSPTVIPGEPREEVGPASPHPE).

This sequence belongs to the type I cytokine receptor family. Type 4 subfamily. As to quaternary structure, heterodimer of an alpha and a beta subunit. The beta subunit is common to the IL3, IL5 and GM-CSF receptors. The signaling GM-CSF receptor complex is a dodecamer of two head-to-head hexamers of two alpha, two beta, and two ligand subunits. Interacts with TMEM102; this interaction occurs preferentially in the absence of CSF2. Interacts with FCER1G; this interaction is direct. Interacts with LYN. May be phosphorylated by LYN.

Its subcellular location is the membrane. Its function is as follows. High affinity receptor for interleukin-3, interleukin-5 and granulocyte-macrophage colony-stimulating factor. The sequence is that of Cytokine receptor common subunit beta (Csf2rb) from Mus musculus (Mouse).